The following is a 119-amino-acid chain: Putative yippee-like protein Os10g0369500 (119 aa).

One can recognise a Yippee domain in the interval 21–118 (AVLKCRRCRV…LEKARMWKEA (98 aa)). Residues C25, C28, C81, and C84 each contribute to the Zn(2+) site.

The protein belongs to the yippee family.

In Oryza sativa subsp. japonica (Rice), this protein is Putative yippee-like protein Os10g0369500.